Consider the following 266-residue polypeptide: Putative carbamate hydrolase RutD (266 aa).

The AB hydrolase-1 domain occupies 14–115 (PVVVLISGLG…TVLISVNGWL (102 aa)).

This sequence belongs to the AB hydrolase superfamily. Hydrolase RutD family.

It catalyses the reaction carbamate + 2 H(+) = NH4(+) + CO2. Involved in pyrimidine catabolism. May facilitate the hydrolysis of carbamate, a reaction that can also occur spontaneously. This Shigella sonnei (strain Ss046) protein is Putative carbamate hydrolase RutD.